The chain runs to 419 residues: Tyrosine--tRNA ligase (419 aa).

Tyr-42 lines the L-tyrosine pocket. The 'HIGH' region motif lies at 47–56; sequence ATAPSLHVGS. Residues Tyr-179 and Gln-183 each contribute to the L-tyrosine site. The short motif at 239-243 is the 'KMSKS' region element; sequence KMGKT. Lys-242 provides a ligand contact to ATP. The S4 RNA-binding domain maps to 353-418; sequence IVLANLFADA…GKKKIVLVKP (66 aa).

This sequence belongs to the class-I aminoacyl-tRNA synthetase family. TyrS type 1 subfamily. As to quaternary structure, homodimer.

It localises to the cytoplasm. The enzyme catalyses tRNA(Tyr) + L-tyrosine + ATP = L-tyrosyl-tRNA(Tyr) + AMP + diphosphate + H(+). In terms of biological role, catalyzes the attachment of tyrosine to tRNA(Tyr) in a two-step reaction: tyrosine is first activated by ATP to form Tyr-AMP and then transferred to the acceptor end of tRNA(Tyr). The polypeptide is Tyrosine--tRNA ligase (Caulobacter sp. (strain K31)).